A 392-amino-acid polypeptide reads, in one-letter code: Succinate--CoA ligase [ADP-forming] subunit beta (392 aa).

The ATP-grasp domain maps to 9 to 248 (KDILKKFGVS…TNEEDPFEVE (240 aa)). ATP is bound by residues lysine 50, 57 to 59 (GRG), glutamate 103, methionine 106, and glutamate 111. The Mg(2+) site is built by asparagine 203 and aspartate 217. Substrate contacts are provided by residues asparagine 268 and 325 to 327 (GIV).

Belongs to the succinate/malate CoA ligase beta subunit family. Heterotetramer of two alpha and two beta subunits. The cofactor is Mg(2+).

The catalysed reaction is succinate + ATP + CoA = succinyl-CoA + ADP + phosphate. It catalyses the reaction GTP + succinate + CoA = succinyl-CoA + GDP + phosphate. Its pathway is carbohydrate metabolism; tricarboxylic acid cycle; succinate from succinyl-CoA (ligase route): step 1/1. Functionally, succinyl-CoA synthetase functions in the citric acid cycle (TCA), coupling the hydrolysis of succinyl-CoA to the synthesis of either ATP or GTP and thus represents the only step of substrate-level phosphorylation in the TCA. The beta subunit provides nucleotide specificity of the enzyme and binds the substrate succinate, while the binding sites for coenzyme A and phosphate are found in the alpha subunit. This chain is Succinate--CoA ligase [ADP-forming] subunit beta, found in Chlorobium limicola (strain DSM 245 / NBRC 103803 / 6330).